We begin with the raw amino-acid sequence, 409 residues long: Casein kinase II subunit alpha-1 (409 aa).

The signal sequence occupies residues 1 to 35; that stretch reads MIDTLFFLFFLFFDSPLRRLLLLCAVLALRAPTAH. N-linked (GlcNAc...) asparagine glycosylation occurs at Asn72. The region spanning 110–395 is the Protein kinase domain; it reads YEVVRKVGRG…AKEAMAHAYF (286 aa). ATP is bound by residues 116 to 124 and Lys139; that span reads VGRGKYSEV. N-linked (GlcNAc...) asparagine glycosylation occurs at Asn188. Asp227 functions as the Proton acceptor in the catalytic mechanism.

The protein belongs to the protein kinase superfamily. Ser/Thr protein kinase family. CK2 subfamily. Heterotetramer of two catalytic alpha subunits and two regulatory beta subunits. Seems to be present in all plant organs. But seems to be less expressed than CKA2.

It is found in the nucleus. Its subcellular location is the nucleolus. The catalysed reaction is L-seryl-[protein] + ATP = O-phospho-L-seryl-[protein] + ADP + H(+). The enzyme catalyses L-threonyl-[protein] + ATP = O-phospho-L-threonyl-[protein] + ADP + H(+). Its activity is regulated as follows. Inhibited by heparin. In terms of biological role, casein kinases are operationally defined by their preferential utilization of acidic proteins such as caseins as substrates. Phosphorylates casein in vitro. The alpha chain contains the catalytic site. The tetrameric holoenzyme CK2, composed of two alpha and two beta subunits, phosphorylates the transcription factor GBFl, resulting in stimulation of its DNA binding activity. CK2 phosphorylates the transcription factor PIF1 after an exposure to light, resulting in a proteasome-dependent degradation of PIF1 and promotion of photomorphogenesis. CK2 phosphorylates translation initiation factors. May participate in the regulation of the initiation of translation. Acts as a circadian clock component that maintains the correct period length through phosphorylation of CCA1. Required for the maintenance and control of genomic stability and chromatin structure. May act as an ectokinase that phosphorylates several extracellular proteins. In Arabidopsis thaliana (Mouse-ear cress), this protein is Casein kinase II subunit alpha-1.